Consider the following 879-residue polypeptide: Phosphoenolpyruvate carboxylase (879 aa).

Residues His138 and Lys545 contribute to the active site.

It belongs to the PEPCase type 1 family. Mg(2+) serves as cofactor.

The enzyme catalyses oxaloacetate + phosphate = phosphoenolpyruvate + hydrogencarbonate. In terms of biological role, forms oxaloacetate, a four-carbon dicarboxylic acid source for the tricarboxylic acid cycle. This chain is Phosphoenolpyruvate carboxylase, found in Haemophilus influenzae (strain PittEE).